We begin with the raw amino-acid sequence, 546 residues long: Chaperonin GroEL (546 aa).

ATP is bound by residues 29-32 (TLGP), Lys-50, 86-90 (DGTTT), Gly-414, 477-479 (NAL), and Asp-493.

This sequence belongs to the chaperonin (HSP60) family. Forms a cylinder of 14 subunits composed of two heptameric rings stacked back-to-back. Interacts with the co-chaperonin GroES.

Its subcellular location is the cytoplasm. It catalyses the reaction ATP + H2O + a folded polypeptide = ADP + phosphate + an unfolded polypeptide.. Its function is as follows. Together with its co-chaperonin GroES, plays an essential role in assisting protein folding. The GroEL-GroES system forms a nano-cage that allows encapsulation of the non-native substrate proteins and provides a physical environment optimized to promote and accelerate protein folding. The protein is Chaperonin GroEL of Leptospira interrogans serogroup Icterohaemorrhagiae serovar Lai (strain 56601).